The sequence spans 390 residues: Pyruvate dehydrogenase E1 component subunit alpha-1, mitochondrial (390 aa).

A mitochondrion-targeting transit peptide spans 1–15 (MAAAILLRRVPPARA). Residues His91, Tyr117, Arg118, Gly166, Val168, Asp197, Gly198, Ala199, Asn226, and Tyr228 each contribute to the pyruvate site. 8 residues coordinate thiamine diphosphate: Tyr117, Arg118, Gly166, Val168, Asp197, Gly198, Ala199, and Asn226. Asp197 lines the Mg(2+) pocket. Asn226 and Tyr228 together coordinate Mg(2+). Thiamine diphosphate is bound at residue His292. The interval 293–312 (SMSDPGSTYRTRDEISGVRQ) is disordered. The span at 302–312 (RTRDEISGVRQ) shows a compositional bias: basic and acidic residues.

Tetramer of 2 alpha and 2 beta subunits. The cofactor is thiamine diphosphate. It depends on Mg(2+) as a cofactor.

It is found in the mitochondrion matrix. It carries out the reaction N(6)-[(R)-lipoyl]-L-lysyl-[protein] + pyruvate + H(+) = N(6)-[(R)-S(8)-acetyldihydrolipoyl]-L-lysyl-[protein] + CO2. Its function is as follows. The pyruvate dehydrogenase complex catalyzes the overall conversion of pyruvate to acetyl-CoA and CO(2). It contains multiple copies of three enzymatic components: pyruvate dehydrogenase (E1), dihydrolipoamide acetyltransferase (E2) and lipoamide dehydrogenase (E3). In Oryza sativa subsp. japonica (Rice), this protein is Pyruvate dehydrogenase E1 component subunit alpha-1, mitochondrial.